The following is a 212-amino-acid chain: MSPDLSIEQTLLARGYRVLAGIDEAGRGCWAGPVVAAAVVLAPIVYERPGLLDAVDDSKQLTAVARERAYTLVQRYARGIGVGTVPAFLVDAYGILPATRLAMTLALLSLPCSVDALLIDAERLPGIRVPQESLVRGDARSLSIAAASIIAKVTRDRLMQTADRCYPQYGFALHKGYGTPVHRRALRQYGPSPFHRRTFQPVLELLDLTDSS.

The region spanning 17 to 211 (RVLAGIDEAG…VLELLDLTDS (195 aa)) is the RNase H type-2 domain. The a divalent metal cation site is built by Asp23, Glu24, and Asp120.

It belongs to the RNase HII family. It depends on Mn(2+) as a cofactor. Mg(2+) serves as cofactor.

The protein localises to the cytoplasm. It carries out the reaction Endonucleolytic cleavage to 5'-phosphomonoester.. Functionally, endonuclease that specifically degrades the RNA of RNA-DNA hybrids. This is Ribonuclease HII from Chloroflexus aggregans (strain MD-66 / DSM 9485).